The chain runs to 32 residues: Protamine-2 (32 aa).

The disordered stretch occupies residues 1–32; sequence PRRRRSSSRPVRRRRARRVSRRRRRRGGRRRR.

Testis.

It is found in the nucleus. It localises to the chromosome. Protamines substitute for histones in the chromatin of sperm during the haploid phase of spermatogenesis. They compact sperm DNA into a highly condensed, stable and inactive complex. The protein is Protamine-2 of Oncorhynchus mykiss (Rainbow trout).